The chain runs to 436 residues: Mannitol-binding protein (436 aa).

An N-terminal signal peptide occupies residues 1–22 (MNDSIKACLAAACLALPLLAQG).

Belongs to the bacterial solute-binding protein 1 family.

The protein localises to the periplasm. Its function is as follows. Binds mannitol with high affinity. This is Mannitol-binding protein from Pseudomonas aeruginosa (strain ATCC 15692 / DSM 22644 / CIP 104116 / JCM 14847 / LMG 12228 / 1C / PRS 101 / PAO1).